The primary structure comprises 172 residues: Adenine phosphoribosyltransferase (172 aa).

The protein belongs to the purine/pyrimidine phosphoribosyltransferase family. As to quaternary structure, homodimer.

It is found in the cytoplasm. It carries out the reaction AMP + diphosphate = 5-phospho-alpha-D-ribose 1-diphosphate + adenine. The protein operates within purine metabolism; AMP biosynthesis via salvage pathway; AMP from adenine: step 1/1. In terms of biological role, catalyzes a salvage reaction resulting in the formation of AMP, that is energically less costly than de novo synthesis. The protein is Adenine phosphoribosyltransferase of Clostridium botulinum (strain Loch Maree / Type A3).